A 447-amino-acid chain; its full sequence is Mannose/glucose-specific lectin (447 aa).

Jacalin-type lectin domains follow at residues 5 to 148 (MISV…FVKP), 153 to 294 (TISF…YVKP), and 300 to 443 (SISI…FVKP).

This sequence belongs to the jacalin lectin family. In terms of tissue distribution, expressed in seeds (at protein level).

Its activity is regulated as follows. Hemagglutinating activity is slightly inhibited by alpha-methyl-D-mannopyranoside. Its function is as follows. D-mannose/D-glucose-binding lectin that also binds derivatives N-acetyl-D-glucosamine and alpha-methyl-D-mannopyranoside. Does not bind D-galactose, L-Rhamnose, D-fructose, lactose or glycoproteins fetiun and mucin. Shows agglutinating activity towards human and rabbit erythrocytes. Also displays antimicrobial activity against L.infantum. This chain is Mannose/glucose-specific lectin, found in Parkia pendula (Inga pendula).